The following is a 336-amino-acid chain: Phenylalanine--tRNA ligase alpha subunit (336 aa).

Glutamate 255 contributes to the Mg(2+) binding site.

This sequence belongs to the class-II aminoacyl-tRNA synthetase family. Phe-tRNA synthetase alpha subunit type 1 subfamily. In terms of assembly, tetramer of two alpha and two beta subunits. Mg(2+) serves as cofactor.

Its subcellular location is the cytoplasm. It catalyses the reaction tRNA(Phe) + L-phenylalanine + ATP = L-phenylalanyl-tRNA(Phe) + AMP + diphosphate + H(+). This chain is Phenylalanine--tRNA ligase alpha subunit, found in Gemmatimonas aurantiaca (strain DSM 14586 / JCM 11422 / NBRC 100505 / T-27).